We begin with the raw amino-acid sequence, 252 residues long: O-methyltransferase hkm8 (252 aa).

Residues glutamate 73, 75 to 76 (GT), serine 81, and aspartate 100 each bind S-adenosyl-L-methionine.

Belongs to the class I-like SAM-binding methyltransferase superfamily. Cation-dependent O-methyltransferase family.

Its pathway is secondary metabolite biosynthesis. Functionally, O-methyltransferase; part of the gene cluster that mediates the biosynthesis of hancockiamides, an unusual new family of N-cinnamoylated piperazines. The NRPS hkm10 and the NmrA-like reductase hkm9 are proposed to convert two molecules of L-Phe to the intermediary piperazine called xenocockiamide A. Xenocockiamide A is then converted to hancockiamide D via a series of hydroxylations and O-methylations. The tyrosinase hkm6 may catalyze an aromatic hydroxylation, then the 2-oxoglutarate-dependent Fe(II) dioxygenase hkm4 and the FAD-dependent phenol hydroxylase hkm7 may catalyze consecutive hydroxylations to install 2 more hydroxy groups, and the methyltransferase hkm8 probably catalyzes two methylations using 2 molecules of S-adenosyl-L-methionine (SAM). The NRPS hkm11 activates and transfers trans-cinnamate supplied by the PAL hkm12 to hancockiamide D and produces hancockiamide A. NRPS Hkm11 has the flexibility to tolerate the bulky hancockiamide G as a substrate and the absence of the acetyl-transferase hkm3 opens up the opportunity for hkm11 to introduce a second N-cinnamoyl moiety. The cytochrome P450 monooxygenase hkm5 catalyzes the methylenedioxy bridge formation, converting hancockiamide A into hancockiamide G. Hkm5 can also convert hancockiamide B into hancockiamide C, and hancockiamide D into hancockiamide H. The N-acetyltransferase hkm3 finally transfers an acetyl group to 1-N of piperazine, converting hancockiamide A into hancockiamide B and hancockiamide G into hancockiamide C. This chain is O-methyltransferase hkm8, found in Aspergillus hancockii.